The primary structure comprises 315 residues: Serine/threonine-protein phosphatase PP2A catalytic subunit 3 (315 aa).

Positions 62, 64, 90, and 122 each coordinate Mn(2+). His-123 serves as the catalytic Proton donor. His-172 and His-247 together coordinate Mn(2+). Residues 294–315 form a disordered region; sequence QFEPAPRENEPHTTRRVPDYFL. A compositionally biased stretch (basic and acidic residues) spans 298–315; that stretch reads APRENEPHTTRRVPDYFL. The residue at position 315 (Leu-315) is a Leucine methyl ester.

The protein belongs to the PPP phosphatase family. PP-2A subfamily. Requires Mn(2+) as cofactor. Reversibly methyl esterified on Leu-315 by leucine carboxyl methyltransferase 1 (PPM1) and protein phosphatase methylesterase 1 (PPE1). Carboxyl methylation influences the affinity of the catalytic subunit for the different regulatory subunits, thereby modulating the PP2A holoenzyme's substrate specificity, enzyme activity and cellular localization.

It catalyses the reaction O-phospho-L-seryl-[protein] + H2O = L-seryl-[protein] + phosphate. It carries out the reaction O-phospho-L-threonyl-[protein] + H2O = L-threonyl-[protein] + phosphate. This is Serine/threonine-protein phosphatase PP2A catalytic subunit 3 (Ppn3) from Paramecium tetraurelia.